The following is a 111-amino-acid chain: Ribosome-binding factor A (111 aa).

It belongs to the RbfA family. In terms of assembly, monomer. Binds 30S ribosomal subunits, but not 50S ribosomal subunits or 70S ribosomes.

Its subcellular location is the cytoplasm. One of several proteins that assist in the late maturation steps of the functional core of the 30S ribosomal subunit. Associates with free 30S ribosomal subunits (but not with 30S subunits that are part of 70S ribosomes or polysomes). Required for efficient processing of 16S rRNA. May interact with the 5'-terminal helix region of 16S rRNA. In Helicobacter pylori (strain J99 / ATCC 700824) (Campylobacter pylori J99), this protein is Ribosome-binding factor A.